A 119-amino-acid chain; its full sequence is Protein TusC (119 aa).

It belongs to the DsrF/TusC family. In terms of assembly, heterohexamer, formed by a dimer of trimers. The hexameric TusBCD complex contains 2 copies each of TusB, TusC and TusD. The TusBCD complex interacts with TusE.

The protein localises to the cytoplasm. Its function is as follows. Part of a sulfur-relay system required for 2-thiolation of 5-methylaminomethyl-2-thiouridine (mnm(5)s(2)U) at tRNA wobble positions. This Shigella sonnei (strain Ss046) protein is Protein TusC.